The primary structure comprises 591 residues: L-fucose isomerase (591 aa).

Catalysis depends on proton acceptor residues Glu-337 and Asp-361. The Mn(2+) site is built by Glu-337, Asp-361, and His-528.

It belongs to the L-fucose isomerase family. As to quaternary structure, homohexamer. Requires Mn(2+) as cofactor.

It is found in the cytoplasm. It catalyses the reaction L-fucose = L-fuculose. Its pathway is carbohydrate degradation; L-fucose degradation; L-lactaldehyde and glycerone phosphate from L-fucose: step 1/3. Its function is as follows. Converts the aldose L-fucose into the corresponding ketose L-fuculose. In Salmonella paratyphi B (strain ATCC BAA-1250 / SPB7), this protein is L-fucose isomerase.